Consider the following 189-residue polypeptide: Interferon alpha-17 (189 aa).

The N-terminal stretch at 1–23 is a signal peptide; the sequence is MALSFSLLMAVLVLSYKSICSLG. Intrachain disulfides connect Cys24–Cys122 and Cys52–Cys162.

The protein belongs to the alpha/beta interferon family.

The protein localises to the secreted. Produced by macrophages, IFN-alpha have antiviral activities. Interferon stimulates the production of two enzymes: a protein kinase and an oligoadenylate synthetase. This chain is Interferon alpha-17 (IFNA17), found in Homo sapiens (Human).